The following is a 312-amino-acid chain: Bifunctional pinoresinol-lariciresinol reductase (312 aa).

Residues 11–17 (GGTGYIG), Arg36, and Lys45 each bind NADP(+). Lys138 acts as the Proton acceptor in catalysis. Position 142 (Arg142) interacts with NADP(+). Substrate is bound at residue His270.

It belongs to the NmrA-type oxidoreductase family. Isoflavone reductase subfamily. As to quaternary structure, dimer.

The enzyme catalyses (+)-lariciresinol + NADP(+) = (+)-pinoresinol + NADPH + H(+). The catalysed reaction is (-)-secoisolariciresinol + NADP(+) = (+)-lariciresinol + NADPH + H(+). Functionally, reductase involved in lignan biosynthesis. Catalyzes the enantioselective sequential conversion of (+)-pinoresinol into (+)-lariciresinol and of (+)-lariciresinol into (-)-secoisolariciresinol. Abstracts the 4R-hydride from the NADPH cofactor during catalysis. The chain is Bifunctional pinoresinol-lariciresinol reductase from Thuja plicata (Western red-cedar).